The following is a 370-amino-acid chain: MRVKEQLLTLRAYVPGKNIEEVKREYGLSKIVKLASNENPFGCSARVTEALTSLASQYALYPDGYAFELRTKIAEHLGVKAEQLLFGSGLDEVIQMISRALLHEGTNVVMANPTFSQYHHHAVIEGAEVREVSLKDGIHDLDAMLEQVDEKTKIVWICNPNNPTGTYVEKQKLLSFLESVPKSALVIMDEAYYEYAEAEDYPQTLPLLEKYENLMVLRTFSKAYGLAAFRIGYAIGDAKLIGQLEVARLPFNTSTVAQSVALAALEDQAFLQDCVQKNAEGLNQYYAFCKEYNVFYYPSQTNFIFLKLGIPGNEAFERLMKKGYIVRSGAAFGIDDGIRITVGLKEENDEIIELLKELVNEQVQKEETYS.

An N6-(pyridoxal phosphate)lysine modification is found at Lys-222.

The protein belongs to the class-II pyridoxal-phosphate-dependent aminotransferase family. Histidinol-phosphate aminotransferase subfamily. Homodimer. Pyridoxal 5'-phosphate is required as a cofactor.

The catalysed reaction is L-histidinol phosphate + 2-oxoglutarate = 3-(imidazol-4-yl)-2-oxopropyl phosphate + L-glutamate. The protein operates within amino-acid biosynthesis; L-histidine biosynthesis; L-histidine from 5-phospho-alpha-D-ribose 1-diphosphate: step 7/9. This chain is Histidinol-phosphate aminotransferase 1 (hisC1), found in Bacillus cereus (strain ATCC 14579 / DSM 31 / CCUG 7414 / JCM 2152 / NBRC 15305 / NCIMB 9373 / NCTC 2599 / NRRL B-3711).